Reading from the N-terminus, the 284-residue chain is 4-hydroxybenzoate octaprenyltransferase (284 aa).

Transmembrane regions (helical) follow at residues 33–53 (VIAA…LGVF), 93–113 (IGLF…MNPL), 136–156 (HIPQ…AWAA), 159–179 (GELP…TIAY), 209–229 (LIIG…GQFY), 235–252 (YYWT…QQHL), and 264–284 (AFLN…VAFW).

The protein belongs to the UbiA prenyltransferase family. The cofactor is Mg(2+).

The protein localises to the cell inner membrane. It carries out the reaction all-trans-octaprenyl diphosphate + 4-hydroxybenzoate = 4-hydroxy-3-(all-trans-octaprenyl)benzoate + diphosphate. It participates in cofactor biosynthesis; ubiquinone biosynthesis. In terms of biological role, catalyzes the prenylation of para-hydroxybenzoate (PHB) with an all-trans polyprenyl group. Mediates the second step in the final reaction sequence of ubiquinone-8 (UQ-8) biosynthesis, which is the condensation of the polyisoprenoid side chain with PHB, generating the first membrane-bound Q intermediate 3-octaprenyl-4-hydroxybenzoate. In Vibrio parahaemolyticus serotype O3:K6 (strain RIMD 2210633), this protein is 4-hydroxybenzoate octaprenyltransferase.